We begin with the raw amino-acid sequence, 425 residues long: Histidine--tRNA ligase (425 aa).

This sequence belongs to the class-II aminoacyl-tRNA synthetase family. In terms of assembly, homodimer.

The protein localises to the cytoplasm. The enzyme catalyses tRNA(His) + L-histidine + ATP = L-histidyl-tRNA(His) + AMP + diphosphate + H(+). This chain is Histidine--tRNA ligase, found in Desulforapulum autotrophicum (strain ATCC 43914 / DSM 3382 / VKM B-1955 / HRM2) (Desulfobacterium autotrophicum).